A 60-amino-acid polypeptide reads, in one-letter code: Large ribosomal subunit protein uL30 (60 aa).

The protein belongs to the universal ribosomal protein uL30 family. In terms of assembly, part of the 50S ribosomal subunit.

This Streptococcus uberis (strain ATCC BAA-854 / 0140J) protein is Large ribosomal subunit protein uL30.